The chain runs to 310 residues: Aspartate carbamoyltransferase catalytic subunit 2 (310 aa).

Residues R55 and T56 each contribute to the carbamoyl phosphate site. K85 is a binding site for L-aspartate. Residues R106, H134, and Q137 each coordinate carbamoyl phosphate. 2 residues coordinate L-aspartate: R167 and R228. Residues L266 and P267 each contribute to the carbamoyl phosphate site.

This sequence belongs to the aspartate/ornithine carbamoyltransferase superfamily. ATCase family. In terms of assembly, heterododecamer (2C3:3R2) of six catalytic PyrB chains organized as two trimers (C3), and six regulatory PyrI chains organized as three dimers (R2).

The catalysed reaction is carbamoyl phosphate + L-aspartate = N-carbamoyl-L-aspartate + phosphate + H(+). The protein operates within pyrimidine metabolism; UMP biosynthesis via de novo pathway; (S)-dihydroorotate from bicarbonate: step 2/3. In terms of biological role, catalyzes the condensation of carbamoyl phosphate and aspartate to form carbamoyl aspartate and inorganic phosphate, the committed step in the de novo pyrimidine nucleotide biosynthesis pathway. In Shewanella halifaxensis (strain HAW-EB4), this protein is Aspartate carbamoyltransferase catalytic subunit 2.